Consider the following 160-residue polypeptide: UPF0225 protein CGSHiEE_01665 (160 aa).

Belongs to the UPF0225 family.

In Haemophilus influenzae (strain PittEE), this protein is UPF0225 protein CGSHiEE_01665.